A 536-amino-acid polypeptide reads, in one-letter code: Proto-oncogene tyrosine-protein kinase Yrk (536 aa).

A lipid anchor (N-myristoyl glycine) is attached at glycine 2. S-palmitoyl cysteine attachment occurs at residues cysteine 3 and cysteine 6. The segment at 10–36 is disordered; it reads ISGKGQGGSGTGTPAHPPSQYDPDPTQ. Residues 81-142 form the SH3 domain; sequence GGVTLFIALY…PSNYVAPVDS (62 aa). An SH2 domain is found at 148–245; the sequence is WYFGKIGRKD…GLCCRLAVPC (98 aa). The region spanning 270 to 523 is the Protein kinase domain; sequence LQLLQKLGNG…YLQSFLEDYF (254 aa). ATP-binding positions include 276–284 and lysine 298; that span reads LGNGQFGEV. Catalysis depends on aspartate 389, which acts as the Proton acceptor. Tyrosine 419 is modified (phosphotyrosine; by autocatalysis). Residue tyrosine 530 is modified to Phosphotyrosine.

The protein belongs to the protein kinase superfamily. Tyr protein kinase family. SRC subfamily. Post-translationally, phosphorylated. As to expression, there are elevated levels of this protein in neural and hematopoietic tissues.

The catalysed reaction is L-tyrosyl-[protein] + ATP = O-phospho-L-tyrosyl-[protein] + ADP + H(+). May participate in signaling pathways. The sequence is that of Proto-oncogene tyrosine-protein kinase Yrk (YRK) from Gallus gallus (Chicken).